The chain runs to 353 residues: MTIAVGRVTKEENDLFDIMDDWLRRDRFVFVGWSGLLLFPCAYFALGGWFTGTTFVTSWYTHGLASSYLEGCNFLTAAVSTPANSLAHSLLLLWGPEAQGDFTRWCQLGGLWTFVALHGAFALIGFMLRQFELARSVQLRPYNAISFSGPIAVFVSVFLIYPLGQSGWFFAPSFGVAAIFRFILFFQGFHNWTLNPFHMMGVAGVLGAALLCAIHGATVENTLFEDGDGANTFRAFNPTQAEETYSMVTANRFWSQIFGVAFSNKRWLHFFMLFVPVTGLWMSAIGVVGLALNLRAYDFVSQEIRAAEDPEFETFYTKNILLNEGIRAWMAAQDQPHENLIFPEEVLPRGNAL.

Position 2 is an N-acetylthreonine (Thr-2). Thr-2 carries the post-translational modification Phosphothreonine. Residues 41 to 61 (CAYFALGGWFTGTTFVTSWYT) form a helical membrane-spanning segment. His-118 provides a ligand contact to chlorophyll a. Residues 125-141 (GFMLRQFELARSVQLRP) traverse the membrane as a helical segment. 2 residues coordinate pheophytin a: Gln-130 and Asn-143. The chain crosses the membrane as a helical span at residues 153–166 (VFVSVFLIYPLGQS). His-198 contacts chlorophyll a. The chain crosses the membrane as a helical span at residues 208–228 (AALLCAIHGATVENTLFEDGD). A plastoquinone contacts are provided by His-215 and Phe-262. His-215 is a Fe cation binding site. His-269 is a binding site for Fe cation. A helical membrane pass occupies residues 279–295 (GLWMSAIGVVGLALNLR).

Belongs to the reaction center PufL/M/PsbA/D family. PSII is composed of 1 copy each of membrane proteins PsbA, PsbB, PsbC, PsbD, PsbE, PsbF, PsbH, PsbI, PsbJ, PsbK, PsbL, PsbM, PsbT, PsbX, PsbY, PsbZ, Psb30/Ycf12, at least 3 peripheral proteins of the oxygen-evolving complex and a large number of cofactors. It forms dimeric complexes. The D1/D2 heterodimer binds P680, chlorophylls that are the primary electron donor of PSII, and subsequent electron acceptors. It shares a non-heme iron and each subunit binds pheophytin, quinone, additional chlorophylls, carotenoids and lipids. There is also a Cl(-1) ion associated with D1 and D2, which is required for oxygen evolution. The PSII complex binds additional chlorophylls, carotenoids and specific lipids. serves as cofactor.

It localises to the plastid. Its subcellular location is the chloroplast thylakoid membrane. It catalyses the reaction 2 a plastoquinone + 4 hnu + 2 H2O = 2 a plastoquinol + O2. In terms of biological role, photosystem II (PSII) is a light-driven water:plastoquinone oxidoreductase that uses light energy to abstract electrons from H(2)O, generating O(2) and a proton gradient subsequently used for ATP formation. It consists of a core antenna complex that captures photons, and an electron transfer chain that converts photonic excitation into a charge separation. The D1/D2 (PsbA/PsbD) reaction center heterodimer binds P680, the primary electron donor of PSII as well as several subsequent electron acceptors. D2 is needed for assembly of a stable PSII complex. The sequence is that of Photosystem II D2 protein from Saccharum hybrid (Sugarcane).